Consider the following 102-residue polypeptide: Large ribosomal subunit protein bL21 (102 aa).

Belongs to the bacterial ribosomal protein bL21 family. As to quaternary structure, part of the 50S ribosomal subunit. Contacts protein L20.

Its function is as follows. This protein binds to 23S rRNA in the presence of protein L20. This is Large ribosomal subunit protein bL21 from Bacillus cytotoxicus (strain DSM 22905 / CIP 110041 / 391-98 / NVH 391-98).